Reading from the N-terminus, the 240-residue chain is Cell division protein FtsQ (240 aa).

The Cytoplasmic segment spans residues 1-7; sequence MTGPGLR. Residues 8–28 traverse the membrane as a helical segment; that stretch reads LLAGMGLAGALVLGLSLWLHF. Residues 29 to 240 lie on the Periplasmic side of the membrane; the sequence is DPDQHLPIGS…EADNDGGNAR (212 aa). Positions 34–102 constitute a POTRA domain; the sequence is LPIGSIQITG…DTLEVHVTEP (69 aa).

This sequence belongs to the FtsQ/DivIB family. FtsQ subfamily. As to quaternary structure, part of a complex composed of FtsB, FtsL and FtsQ.

It is found in the cell inner membrane. In terms of biological role, essential cell division protein. May link together the upstream cell division proteins, which are predominantly cytoplasmic, with the downstream cell division proteins, which are predominantly periplasmic. May control correct divisome assembly. In Thioalkalivibrio sp. (strain K90mix), this protein is Cell division protein FtsQ.